We begin with the raw amino-acid sequence, 141 residues long: Nucleoside diphosphate kinase (141 aa).

The ATP site is built by Lys11, Phe59, Arg87, Thr93, Arg104, and Asn114. Catalysis depends on His117, which acts as the Pros-phosphohistidine intermediate.

Belongs to the NDK family. As to quaternary structure, homotetramer. Requires Mg(2+) as cofactor.

It is found in the cytoplasm. It carries out the reaction a 2'-deoxyribonucleoside 5'-diphosphate + ATP = a 2'-deoxyribonucleoside 5'-triphosphate + ADP. The enzyme catalyses a ribonucleoside 5'-diphosphate + ATP = a ribonucleoside 5'-triphosphate + ADP. Its function is as follows. Major role in the synthesis of nucleoside triphosphates other than ATP. The ATP gamma phosphate is transferred to the NDP beta phosphate via a ping-pong mechanism, using a phosphorylated active-site intermediate. In Pseudomonas fluorescens (strain ATCC BAA-477 / NRRL B-23932 / Pf-5), this protein is Nucleoside diphosphate kinase.